Consider the following 91-residue polypeptide: Small ribosomal subunit protein bS18 (91 aa).

It belongs to the bacterial ribosomal protein bS18 family. In terms of assembly, part of the 30S ribosomal subunit. Forms a tight heterodimer with protein bS6.

Its function is as follows. Binds as a heterodimer with protein bS6 to the central domain of the 16S rRNA, where it helps stabilize the platform of the 30S subunit. The protein is Small ribosomal subunit protein bS18 of Gluconacetobacter diazotrophicus (strain ATCC 49037 / DSM 5601 / CCUG 37298 / CIP 103539 / LMG 7603 / PAl5).